Here is a 651-residue protein sequence, read N- to C-terminus: Polyadenylate-binding protein 1 (651 aa).

A compositionally biased stretch (low complexity) spans 1–27 (MSSTESPVPAAAAPAEAVPASTPAPAA). The segment at 1-42 (MSSTESPVPAAAAPAEAVPASTPAPAAEQPAVGNGEQRNNAD) is disordered. RRM domains are found at residues 47-125 (TSLY…WSQR), 135-211 (GNIF…HHIP), 227-304 (TNVY…RAQK), and 330-407 (VNLY…LAQR). Disordered stretches follow at residues 481-554 (QPGQ…EADQ) and 632-651 (QNDSAGAEAEANAEAPKTEA). Over residues 529 to 540 (AGQPVPGQPMPR) the composition is skewed to pro residues. A PABC domain is found at 555–632 (PGALTAAALA…ALEVLKEYQQ (78 aa)). Low complexity predominate over residues 636 to 651 (AGAEAEANAEAPKTEA).

This sequence belongs to the polyadenylate-binding protein type-1 family. In terms of assembly, part of large ribonucleoprotein complexes (mRNPs) containing RNA-binding proteins RRM4 and PAB1, endosome-binding protein UPA1, core scaffold protein UPA2 and associated factor GRP1. Interacts (via PABC domain) with UPA1 (via PAM2 domain). Interacts (via PABC domain) with UPA2 (via PAM2 domains).

It is found in the cytoplasm. Its subcellular location is the cytoskeleton. The protein localises to the endosome. Its function is as follows. RNA-binding protein involved in the formation of polar-growing hyphae which is essential for infection by the plant pathogen. Component of endosomal mRNA transport that regulates polarity of the infectious hyphae by transporting a broad spectrum of cargo mRNAs from the nucleus to cell poles. The chain is Polyadenylate-binding protein 1 from Mycosarcoma maydis (Corn smut fungus).